The sequence spans 162 residues: Shikimate kinase (162 aa).

11 to 16 (GSGKSS) is a binding site for ATP. Serine 15 is a binding site for Mg(2+). Substrate contacts are provided by aspartate 33, arginine 57, and glycine 80. Arginine 116 is an ATP binding site. Position 132 (arginine 132) interacts with substrate.

Belongs to the shikimate kinase family. As to quaternary structure, monomer. Requires Mg(2+) as cofactor.

It localises to the cytoplasm. The catalysed reaction is shikimate + ATP = 3-phosphoshikimate + ADP + H(+). The protein operates within metabolic intermediate biosynthesis; chorismate biosynthesis; chorismate from D-erythrose 4-phosphate and phosphoenolpyruvate: step 5/7. Catalyzes the specific phosphorylation of the 3-hydroxyl group of shikimic acid using ATP as a cosubstrate. The polypeptide is Shikimate kinase (Helicobacter pylori (strain HPAG1)).